Consider the following 355-residue polypeptide: Neutral protease 2 homolog AFUB_100460 (355 aa).

The signal sequence occupies residues 1–19 (MKITALASAILAVAQGALA). Residues 20-172 (LPARAPALDI…PASIKPLDRR (153 aa)) constitute a propeptide that is removed on maturation. Intrachain disulfides connect Cys-179–Cys-251 and Cys-258–Cys-276. Residue His-300 coordinates Zn(2+). Glu-301 is a catalytic residue. The Zn(2+) site is built by His-304 and Asp-315.

The protein belongs to the peptidase M35 family. It depends on Zn(2+) as a cofactor.

The protein localises to the secreted. The catalysed reaction is Preferential cleavage of bonds with hydrophobic residues in P1'. Also 3-Asn-|-Gln-4 and 8-Gly-|-Ser-9 bonds in insulin B chain.. Its function is as follows. Secreted metalloproteinase that allows assimilation of proteinaceous substrates. Shows high activities on basic nuclear substrates such as histone and protamine. May be involved in virulence. In Aspergillus fumigatus (strain CBS 144.89 / FGSC A1163 / CEA10) (Neosartorya fumigata), this protein is Neutral protease 2 homolog AFUB_100460.